A 469-amino-acid polypeptide reads, in one-letter code: Glutamate--tRNA ligase (469 aa).

The short motif at 9-19 (PSPTGFLHVGG) is the 'HIGH' region element. Zn(2+)-binding residues include cysteine 98, cysteine 100, cysteine 125, and aspartate 127. Positions 236–240 (KLSKR) match the 'KMSKS' region motif. Lysine 239 lines the ATP pocket.

This sequence belongs to the class-I aminoacyl-tRNA synthetase family. Glutamate--tRNA ligase type 1 subfamily. In terms of assembly, monomer. The cofactor is Zn(2+).

The protein resides in the cytoplasm. It catalyses the reaction tRNA(Glu) + L-glutamate + ATP = L-glutamyl-tRNA(Glu) + AMP + diphosphate. In terms of biological role, catalyzes the attachment of glutamate to tRNA(Glu) in a two-step reaction: glutamate is first activated by ATP to form Glu-AMP and then transferred to the acceptor end of tRNA(Glu). This chain is Glutamate--tRNA ligase, found in Shewanella sediminis (strain HAW-EB3).